The primary structure comprises 200 residues: Phospholipase A2 inhibitor CgMIP-I (200 aa).

The N-terminal stretch at 1-19 (MKYLHTICLLFIFVARGNS) is a signal peptide. 7 cysteine pairs are disulfide-bonded: C22/C46, C25/C32, C39/C67, C73/C94, C95/C100, C118/C143, and C136/C165. A glycan (N-linked (GlcNAc...) asparagine) is linked at N176.

This sequence belongs to the CNF-like-inhibitor family. In terms of assembly, homomer of 110 kDa composed of 20-25-kDa subunits. N-glycosylated. The glycosidic chain may contain superficial sialic acid residues. Expressed by the liver.

Its subcellular location is the secreted. Functionally, inhibits the enzymatic activity of basic phospholipase A2. Specifically neutralizes PLA2, myotoxic, edema-forming, cytolytic, and anti-coagulant activities, as well as intracerebral lethal effect of the basic myotoxin I from the same venom (AC P0DQP6), crotoxin heterodimer and crotoxin subunit B alone. Does not block the enzymatic activity of crude acidic PLA2 fractions from the same venom. The sequence is that of Phospholipase A2 inhibitor CgMIP-I from Cerrophidion godmani (Porthidium godmani).